A 380-amino-acid chain; its full sequence is Dual-specificity RNA methyltransferase RlmN (380 aa).

Glu94 acts as the Proton acceptor in catalysis. The 240-residue stretch at 100 to 339 folds into the Radical SAM core domain; that stretch reads DGDRATLCVS…VTVRKTRGDD (240 aa). Residues Cys107 and Cys344 are joined by a disulfide bond. [4Fe-4S] cluster is bound by residues Cys114, Cys118, and Cys121. S-adenosyl-L-methionine-binding positions include 168–169, Ser200, 222–224, and Asn301; these read GE and SLH. Cys344 serves as the catalytic S-methylcysteine intermediate.

This sequence belongs to the radical SAM superfamily. RlmN family. The cofactor is [4Fe-4S] cluster.

It is found in the cytoplasm. It carries out the reaction adenosine(2503) in 23S rRNA + 2 reduced [2Fe-2S]-[ferredoxin] + 2 S-adenosyl-L-methionine = 2-methyladenosine(2503) in 23S rRNA + 5'-deoxyadenosine + L-methionine + 2 oxidized [2Fe-2S]-[ferredoxin] + S-adenosyl-L-homocysteine. The enzyme catalyses adenosine(37) in tRNA + 2 reduced [2Fe-2S]-[ferredoxin] + 2 S-adenosyl-L-methionine = 2-methyladenosine(37) in tRNA + 5'-deoxyadenosine + L-methionine + 2 oxidized [2Fe-2S]-[ferredoxin] + S-adenosyl-L-homocysteine. Its function is as follows. Specifically methylates position 2 of adenine 2503 in 23S rRNA and position 2 of adenine 37 in tRNAs. m2A2503 modification seems to play a crucial role in the proofreading step occurring at the peptidyl transferase center and thus would serve to optimize ribosomal fidelity. The sequence is that of Dual-specificity RNA methyltransferase RlmN from Vibrio atlanticus (strain LGP32) (Vibrio splendidus (strain Mel32)).